Consider the following 210-residue polypeptide: Syntaxin-binding protein 6 (210 aa).

Ser-2 is modified (N-acetylserine). Positions 151–210 (GNSILHSAADSVTSAVQKASQALNERGERLGRAEEKTEDLKNSAQQFAETAHKLAMKHKC) constitute a v-SNARE coiled-coil homology domain.

Part of a ternary complex containing SNAP25 and STX1A that can be dissociated by NAPA and NSF. Interacts with STX4A. In terms of tissue distribution, detected at low levels in brain, and at very low levels in heart, adrenal gland, testis, liver and kidney.

Its subcellular location is the cytoplasm. The protein resides in the membrane. Forms non-fusogenic complexes with SNAP25 and STX1A and may thereby modulate the formation of functional SNARE complexes and exocytosis. The protein is Syntaxin-binding protein 6 (STXBP6) of Homo sapiens (Human).